A 4924-amino-acid chain; its full sequence is Hydroxamate-type ferrichrome siderophore peptide synthetase (4924 aa).

4 Carrier domains span residues 715–791 (NQSE…ILLK), 2172–2246 (DGFQ…KRRR), 3254–3328 (NVVE…NTQT), and 4402–4478 (IHLN…QYEK). Serine 752, serine 2206, serine 3288, and serine 4439 each carry O-(pantetheine 4'-phosphoryl)serine.

It belongs to the ATP-dependent AMP-binding enzyme family.

It is found in the cytoplasm. In terms of biological role, involved in intracellular and extracellular ferrichrome siderophore biosynthesis. The protein is Hydroxamate-type ferrichrome siderophore peptide synthetase (sib1) of Schizosaccharomyces pombe (strain 972 / ATCC 24843) (Fission yeast).